We begin with the raw amino-acid sequence, 301 residues long: NADH-cytochrome b5 reductase 2 (301 aa).

The chain crosses the membrane as a helical span at residues 14-30 (FLVPFAGATALSIGLAL). Residues 51-155 (NEWVDLKLSK…KGPIVKWKWE (105 aa)) enclose the FAD-binding FR-type domain. 158–193 (QFKSIALIGGGTGITPLYQLLHQITSNPKDNTKVNL) contributes to the FAD binding site.

It belongs to the flavoprotein pyridine nucleotide cytochrome reductase family. It depends on FAD as a cofactor.

It localises to the mitochondrion outer membrane. The enzyme catalyses 2 Fe(III)-[cytochrome b5] + NADH = 2 Fe(II)-[cytochrome b5] + NAD(+) + H(+). Its function is as follows. May mediate the reduction of outer membrane cytochrome b5. In Candida albicans (strain SC5314 / ATCC MYA-2876) (Yeast), this protein is NADH-cytochrome b5 reductase 2 (MCR1).